The following is a 385-amino-acid chain: Lipid-A-disaccharide synthase (385 aa).

It belongs to the LpxB family.

It catalyses the reaction 2-N,3-O-bis[(3R)-3-hydroxytetradecanoyl]-alpha-D-glucosaminyl 1-phosphate + UDP-2-N,3-O-bis[(3R)-3-hydroxytetradecanoyl]-alpha-D-glucosamine = lipid A disaccharide (E. coli) + UDP + H(+). The catalysed reaction is a lipid X + a UDP-2-N,3-O-bis[(3R)-3-hydroxyacyl]-alpha-D-glucosamine = a lipid A disaccharide + UDP + H(+). It functions in the pathway glycolipid biosynthesis; lipid IV(A) biosynthesis; lipid IV(A) from (3R)-3-hydroxytetradecanoyl-[acyl-carrier-protein] and UDP-N-acetyl-alpha-D-glucosamine: step 5/6. Its function is as follows. Condensation of UDP-2,3-diacylglucosamine and 2,3-diacylglucosamine-1-phosphate to form lipid A disaccharide, a precursor of lipid A, a phosphorylated glycolipid that anchors the lipopolysaccharide to the outer membrane of the cell. The chain is Lipid-A-disaccharide synthase from Wigglesworthia glossinidia brevipalpis.